Reading from the N-terminus, the 588-residue chain is Complement component C8 beta chain (588 aa).

Positions 1 to 30 (MFRVAIPRSALNLHSCLLHVTLSLVLISKA) are cleaved as a signal peptide. Positions 31-46 (AITTAGNEDSDVREAR) are excised as a propeptide. In terms of domain architecture, TSP type-1 1 spans 58 to 113 (DCVISDWSAWSRCDTCQKKRYRYAKLDQPSQFGGEPCHFHDMEDEACDVPDRYTCD). Intrachain disulfides connect C59/C94, C70/C104, C73/C112, C118/C129, C123/C142, C136/C151, and C158/C196. C-linked (Man) tryptophan glycosylation is found at W64 and W67. In terms of domain architecture, LDL-receptor class A spans 115 to 152 (IPLCEGFLCTQTGRCIHRTLQCNGEDDCGDMSDEVGCK). Residues L134, N137, E139, D141, D147, and E148 each contribute to the Ca(2+) site. The region spanning 154-500 (VPKPCRQEAE…EYLAESSSCR (347 aa)) is the MACPF domain. 4 beta stranded membrane passes run 248 to 255 (TIVSIGFA), 258 to 265 (GIAEFGFN), 375 to 382 (TQAGLKIG), and 388 to 395 (VYVSAGIE). 5 cysteine pairs are disulfide-bonded: C374-C399, C499-C547, C501-C517, C504-C519, and C521-C530. Residues 501-531 (CAPCHNNGVAVLRGTRCDCVCPTGYTGRGCE) form the EGF-like domain. A TSP type-1 2 domain is found at 542-588 (DGSWSCWGAWSSCSGRKMSRSRQCNNPVPSDGGLACRGLQQESTDCF). C-linked (Man) tryptophan glycosylation is found at W548 and W551. Cysteines 554 and 587 form a disulfide.

This sequence belongs to the complement C6/C7/C8/C9 family. In terms of assembly, heterotrimer of 3 chains: alpha (C8A), beta (C8B) and gamma (C8G); the alpha and gamma chains are disulfide bonded. Component of the membrane attack complex (MAC), composed of complement C5b, C6, C7, C8A, C8B, C8G and multiple copies of the pore-forming subunit C9.

Its subcellular location is the secreted. It localises to the target cell membrane. Component of the membrane attack complex (MAC), a multiprotein complex activated by the complement cascade, which inserts into a target cell membrane and forms a pore, leading to target cell membrane rupture and cell lysis. The MAC is initiated by proteolytic cleavage of C5 into complement C5b in response to the classical, alternative, lectin and GZMK complement pathways. The complement pathways consist in a cascade of proteins that leads to phagocytosis and breakdown of pathogens and signaling that strengthens the adaptive immune system. C8B, together with C8A and C8G, inserts into the target membrane, but does not form pores by itself. During MAC assembly, associates with C5b, C6 and C7 to form the C5b8 intermediate complex that inserts into the target membrane and traverses the bilayer increasing membrane rigidity. This chain is Complement component C8 beta chain (c8b), found in Paralichthys olivaceus (Bastard halibut).